A 319-amino-acid chain; its full sequence is ATP-dependent 6-phosphofructokinase (319 aa).

Position 11 (Gly11) interacts with ATP. Residue 21-25 coordinates ADP; the sequence is RAVVR. Residues 72–73 and 102–105 each bind ATP; these read RC and GEGS. Position 103 (Glu103) interacts with Mg(2+). Residue 126–128 participates in substrate binding; it reads TID. Residue Asp128 is the Proton acceptor of the active site. Lys155 serves as a coordination point for ADP. Substrate contacts are provided by residues Arg163 and 170–172; that span reads MGR. ADP contacts are provided by residues 186 to 188, Arg212, and 214 to 216; these read GAE and KIN. Residues Glu223, Arg244, and 250-253 contribute to the substrate site; that span reads HVQR.

This sequence belongs to the phosphofructokinase type A (PFKA) family. ATP-dependent PFK group I subfamily. Prokaryotic clade 'B1' sub-subfamily. Homotetramer. Requires Mg(2+) as cofactor.

The protein resides in the cytoplasm. The catalysed reaction is beta-D-fructose 6-phosphate + ATP = beta-D-fructose 1,6-bisphosphate + ADP + H(+). Its pathway is carbohydrate degradation; glycolysis; D-glyceraldehyde 3-phosphate and glycerone phosphate from D-glucose: step 3/4. Its activity is regulated as follows. Allosterically activated by ADP and other diphosphonucleosides, and allosterically inhibited by phosphoenolpyruvate. Functionally, catalyzes the phosphorylation of D-fructose 6-phosphate to fructose 1,6-bisphosphate by ATP, the first committing step of glycolysis. This Thermotoga neapolitana (strain ATCC 49049 / DSM 4359 / NBRC 107923 / NS-E) protein is ATP-dependent 6-phosphofructokinase.